The following is a 184-amino-acid chain: Photosystem I assembly protein Ycf4 (184 aa).

2 helical membrane passes run 22 to 42 (LCWA…GFSS) and 64 to 84 (IVMC…WCTI).

Belongs to the Ycf4 family.

It localises to the plastid. The protein resides in the chloroplast thylakoid membrane. Seems to be required for the assembly of the photosystem I complex. This is Photosystem I assembly protein Ycf4 from Angiopteris evecta (Mule's foot fern).